We begin with the raw amino-acid sequence, 1419 residues long: Collagen alpha-1(II) chain (1419 aa).

An N-terminal signal peptide occupies residues 1–25 (MIRLGAPQSLVLLTLLIATVLQCQG). A propeptide spans 26–113 (QDARKLGPKG…PGLGGGNFAA (88 aa)) (N-terminal propeptide). The disordered stretch occupies residues 28 to 1168 (ARKLGPKGQK…GQREKGPDPL (1141 aa)). 2 stretches are compositionally biased toward basic and acidic residues: residues 36-47 (QKGEPGDIKDII) and 64-85 (PRGD…RDGE). The segment covering 89–104 (PGNPGPPGPPGPPGPP) has biased composition (pro residues). K122 carries the 5-hydroxylysine modification. K122 is a glycosylation site (O-linked (Gal...) hydroxylysine). The span at 124 to 135 (GGAQMGVMQGPM) shows a compositional bias: low complexity. Residues 133–1146 (GPMGPMGPRG…PGPPGPPGPP (1014 aa)) form a triple-helical region region. Residues 140–149 (PRGPPGPAGA) show a composition bias toward pro residues. Residues 150–171 (PGPQGFQGNPGEPGEPGVSGPI) are compositionally biased toward low complexity. Residues 183–197 (PGDDGEAGKPGKAGE) show a composition bias toward basic and acidic residues. Residues K219, K231, and K240 each carry the 5-hydroxylysine modification. O-linked (Gal...) hydroxylysine glycosylation is found at K219, K231, and K240. Low complexity-rich tracts occupy residues 242–252 (ESGSPGENGSP) and 267–282 (TGPA…DGQP). Gly residues predominate over residues 292–301 (GPAGGPGFLG). Residue K306 is modified to 5-hydroxylysine. K306 carries an O-linked (Gal...) hydroxylysine glycan. A compositionally biased stretch (low complexity) spans 335-363 (PAGASGNPGTDGIPGAKGSAGAPGIAGAP). The span at 365 to 374 (FPGPRGPPGP) shows a compositional bias: pro residues. Residues 404–417 (ETGPAGPQGAPGPA) show a composition bias toward low complexity. 5-hydroxylysine is present on residues K540 and K552. 2 O-linked (Gal...) hydroxylysine glycosylation sites follow: K540 and K552. Residues 554–563 (LAGAPGLRGL) show a composition bias toward low complexity. A 4-hydroxyproline mark is found at P591 and P600. A 3-hydroxyproline; partial modification is found at P602. A 4-hydroxyproline mark is found at P603 and P606. The span at 638–668 (ERGSPGAQGLQGPRGLPGTPGTDGPKGAAGP) shows a compositional bias: low complexity. Residues 696–707 (KGDRGDVGEKGP) are compositionally biased toward basic and acidic residues. 2 stretches are compositionally biased toward low complexity: residues 765–780 (AGFA…PGAK) and 809–846 (PTGV…NGNP). Position 839 is a 3-hydroxyproline; partial (P839). Residues P840, P846, and P852 each carry the 4-hydroxyproline modification. The segment covering 1001–1011 (APGPPGSPGPA) has biased composition (pro residues). A compositionally biased stretch (basic and acidic residues) spans 1047-1061 (RGDKGEAGEPGERGL). P1076 carries the post-translational modification 3-hydroxyproline; partial. Low complexity-rich tracts occupy residues 1080 to 1089 (SGDQGTSGPA) and 1103 to 1113 (PSGKDGSNGIP). Position 1113 is a 4-hydroxyproline (P1113). P1118 carries the post-translational modification 3-hydroxyproline. A 4-hydroxyproline modification is found at P1119. Over residues 1131 to 1148 (AGPPGNPGPPGPPGPPGP) the composition is skewed to pro residues. P1133 carries the post-translational modification 3-hydroxyproline; partial. 4-hydroxyproline occurs at positions 1134 and 1137. P1139 is modified (3-hydroxyproline; partial). 2 positions are modified to 4-hydroxyproline: P1140 and P1143. A 3-hydroxyproline; partial modification is found at P1145. P1146 bears the 4-hydroxyproline mark. The segment at 1147-1173 (GPGIDMSAFAGLGQREKGPDPLQYMRA) is nonhelical region (C-terminal). Residues 1185 to 1419 (VEVDATLKSL…GVDIGPVCFL (235 aa)) enclose the Fibrillar collagen NC1 domain. Disulfide bonds link C1215-C1247, C1255-C1417, and C1325-C1370. Ca(2+)-binding residues include D1233, N1235, Q1236, C1238, and D1241. N1320 carries an N-linked (GlcNAc...) asparagine glycan.

Belongs to the fibrillar collagen family. In terms of assembly, homotrimers of alpha 1(II) chains. In terms of processing, contains mostly 4-hydroxyproline. Prolines at the third position of the tripeptide repeating unit (G-X-P) are 4-hydroxylated in some or all of the chains. Post-translationally, contains 3-hydroxyproline at a few sites. This modification occurs on the first proline residue in the sequence motif Gly-Pro-Hyp, where Hyp is 4-hydroxyproline. Lysine residues at the third position of the tripeptide repeating unit (G-X-Y) are 5-hydroxylated in some or all of the chains. In terms of processing, O-glycosylated on hydroxylated lysine residues. The O-linked glycan consists of a Glc-Gal disaccharide. As to expression, expressed in chondrocytes.

It is found in the secreted. It localises to the extracellular space. Its subcellular location is the extracellular matrix. Functionally, type II collagen is specific for cartilaginous tissues. It is essential for the normal embryonic development of the skeleton, for linear growth and for the ability of cartilage to resist compressive forces. The polypeptide is Collagen alpha-1(II) chain (Rattus norvegicus (Rat)).